A 346-amino-acid polypeptide reads, in one-letter code: MDMLDPGLDPASSATAAAAASHDKGPEAEEGVELQEGGDGPGAEEQTAVAIASVQQAAFGDHNIQYQFRTESNGGQVTYRVVQVTDGQLDGQGDAAGAVSVVSTAAFAGGQQAVTQVGVDGAAQRPGPAAASVPTGPAAPFPLAVIQNPFSNGGSPAAEAVSGEARFAYFPASSVGDTTAVSVQTTDQSLQAGGQFYVMMTPQDVLQTGTQRTIAPRTHPYSPKIDGTRTPRDERRRAQHNEVERRRRDKINNWIVQLSKIIPDCHADNSKTGASKGGILSKACDYIRELRQTNQRMQETFKEAERLQMDNELLRQQIEELKNENALLRAQLQQHNLEMVGESTRQ.

Disordered regions lie at residues 1-44 (MDML…PGAE) and 215-244 (APRT…NEVE). Over residues 11-20 (ASSATAAAAA) the composition is skewed to low complexity. The span at 226 to 244 (DGTRTPRDERRRAQHNEVE) shows a compositional bias: basic and acidic residues. One can recognise a bHLH domain in the interval 235–290 (RRRAQHNEVERRRRDKINNWIVQLSKIIPDCHADNSKTGASKGGILSKACDYIREL). Positions 307-328 (LQMDNELLRQQIEELKNENALL) are leucine-zipper.

In terms of assembly, efficient DNA binding requires dimerization with another bHLH protein. Binds DNA as a homodimer or a heterodimer (USF1/USF2). Interacts with MAF.

Its subcellular location is the nucleus. Functionally, transcription factor that binds to a symmetrical DNA sequence (E-boxes) (5'-CACGTG-3') that is found in a variety of viral and cellular promoters. The chain is Upstream stimulatory factor 2 (Usf2) from Mus musculus (Mouse).